We begin with the raw amino-acid sequence, 204 residues long: bMERB domain-containing protein 1 (204 aa).

In terms of domain architecture, bMERB spans 3-150; that stretch reads LKQSLSTHLE…EQEEDKEMAD (148 aa). Residues 162–187 form a disordered region; sequence VTKSPASSRAEKKAEPPPSKPTVAKT.

This Homo sapiens (Human) protein is bMERB domain-containing protein 1.